Here is a 198-residue protein sequence, read N- to C-terminus: Secreted RxLR effector protein PITG_22926 (198 aa).

Positions 1-20 (MLRSFLLIVATVSLFGQCKP) are cleaved as a signal peptide. Residues 43–52 (RFLRTNDEER) carry the RxLR-dEER motif.

It belongs to the RxLR effector family. In terms of assembly, interacts with host MAP3Kbeta2 in the nucleoplasm.

It is found in the secreted. Its subcellular location is the host nucleus. The protein resides in the host nucleolus. Functionally, secreted effector that promotes P.infestans colonization of plant host. Specifically suppresses Avr4/Cf4- and AvrPto/Pto-triggered cell death. Targets the potato MAP3Kbeta2 kinase, a positive regulator of cell death associated with plant immunity, and perturbs signaling pathways triggered by MAP3Kbeta2. The polypeptide is Secreted RxLR effector protein PITG_22926 (Phytophthora infestans (strain T30-4) (Potato late blight agent)).